Reading from the N-terminus, the 171-residue chain is Phosphopantetheine adenylyltransferase (171 aa).

Residue T9 coordinates substrate. ATP-binding positions include 9–10 (TF) and H17. Residues K41, L78, and R92 each contribute to the substrate site. ATP is bound by residues 93 to 95 (GLR), E103, and 128 to 134 (HQAIASK).

Belongs to the bacterial CoaD family. As to quaternary structure, homohexamer. It depends on Mg(2+) as a cofactor.

It localises to the cytoplasm. It catalyses the reaction (R)-4'-phosphopantetheine + ATP + H(+) = 3'-dephospho-CoA + diphosphate. It participates in cofactor biosynthesis; coenzyme A biosynthesis; CoA from (R)-pantothenate: step 4/5. Functionally, reversibly transfers an adenylyl group from ATP to 4'-phosphopantetheine, yielding dephospho-CoA (dPCoA) and pyrophosphate. The sequence is that of Phosphopantetheine adenylyltransferase from Dinoroseobacter shibae (strain DSM 16493 / NCIMB 14021 / DFL 12).